Consider the following 575-residue polypeptide: Cytokinin dehydrogenase 1 (575 aa).

The first 31 residues, 1–31, serve as a signal peptide directing secretion; sequence MGLTSSLRFHRQNNKTFLGIFMILVLSCIPG. N-linked (GlcNAc...) asparagine glycosylation is found at Asn14, Asn38, and Asn115. Residues 84–262 enclose the FAD-binding PCMH-type domain; sequence YQLPPLAILH…TRARISLEPA (179 aa). Positions 120, 122, and 124 each coordinate FAD. Residue His125 is modified to Pros-8alpha-FAD histidine. The FAD site is built by Ser126, Gln130, Asp186, Thr191, Ser197, Ile201, and Ile252. N-linked (GlcNAc...) asparagine glycans are attached at residues Asn303, Asn318, Asn437, and Asn467. Residues Tyr498 and Gln536 each coordinate FAD.

Belongs to the oxygen-dependent FAD-linked oxidoreductase family. It depends on FAD as a cofactor. As to expression, expressed in shoot apexes, lateral shoot meristems, growing tissues of young flowers, and weakly at the root-hypocotyl junction.

The protein resides in the vacuole. It carries out the reaction N(6)-dimethylallyladenine + A + H2O = 3-methyl-2-butenal + adenine + AH2. Functionally, catalyzes the oxidation of cytokinins, a family of N(6)-substituted adenine derivatives that are plant hormones, where the substituent is an isopentenyl group. Catalyzes in vitro the oxidation of various types of cytokinin nucleotides that are known as direct products of cytokinin biosynthesis. Promotes adventitious root initiation downstream of MYC2-dependent jasmonate signaling. Cytokinin degraded by CKX1 is required for cell division in the female gametophyte by modulating the expression of cell cycle genes. This chain is Cytokinin dehydrogenase 1 (CKX1), found in Arabidopsis thaliana (Mouse-ear cress).